A 495-amino-acid polypeptide reads, in one-letter code: Aspartyl/glutamyl-tRNA(Asn/Gln) amidotransferase subunit B (495 aa).

The protein belongs to the GatB/GatE family. GatB subfamily. Heterotrimer of A, B and C subunits.

The enzyme catalyses L-glutamyl-tRNA(Gln) + L-glutamine + ATP + H2O = L-glutaminyl-tRNA(Gln) + L-glutamate + ADP + phosphate + H(+). It carries out the reaction L-aspartyl-tRNA(Asn) + L-glutamine + ATP + H2O = L-asparaginyl-tRNA(Asn) + L-glutamate + ADP + phosphate + 2 H(+). Functionally, allows the formation of correctly charged Asn-tRNA(Asn) or Gln-tRNA(Gln) through the transamidation of misacylated Asp-tRNA(Asn) or Glu-tRNA(Gln) in organisms which lack either or both of asparaginyl-tRNA or glutaminyl-tRNA synthetases. The reaction takes place in the presence of glutamine and ATP through an activated phospho-Asp-tRNA(Asn) or phospho-Glu-tRNA(Gln). The polypeptide is Aspartyl/glutamyl-tRNA(Asn/Gln) amidotransferase subunit B (Halobacterium salinarum (strain ATCC 700922 / JCM 11081 / NRC-1) (Halobacterium halobium)).